Consider the following 251-residue polypeptide: Probable aquaporin TIP4-1 (251 aa).

The next 2 membrane-spanning stretches (helical) occupy residues 26 to 46 (LVLTFVFVFTGVAATMAAGVP) and 57 to 77 (ALAGVAIATALAAGVLVTAGF). The short motif at 85-87 (NPA) is the NPA 1 element. 3 consecutive transmembrane segments (helical) span residues 104-124 (ALYVAAQLLASSLACILLRYL), 144-164 (GLVMEIILTFSLLFVVYATIL), and 170-190 (VPGFGPLLTGLIVGANTIAGG). The NPA 2 signature appears at 198–200 (NPA). Residues 219-239 (WLGPLIGGPLAGLVYESLFLV) traverse the membrane as a helical segment.

It belongs to the MIP/aquaporin (TC 1.A.8) family. TIP (TC 1.A.8.10) subfamily. In terms of tissue distribution, expressed in roots, leaves and anthers.

It is found in the vacuole membrane. Aquaporins facilitate the transport of water and small neutral solutes across cell membranes. May be involved in transport from the vacuolar compartment to the cytoplasm. In Oryza sativa subsp. japonica (Rice), this protein is Probable aquaporin TIP4-1 (TIP4-1).